We begin with the raw amino-acid sequence, 367 residues long: Nuclear hormone receptor-like 1 (367 aa).

The nuclear receptor DNA-binding region spans 32–107 (GQPCVVCGDD…NGMTKSLVLN (76 aa)). NR C4-type zinc fingers lie at residues 35–55 (CVVC…CEGC) and 71–95 (CKSI…FQKC). In terms of domain architecture, NR LBD spans 145 to 367 (EFQSRIDQVT…IANILLFKFT (223 aa)).

Belongs to the nuclear hormone receptor family.

It is found in the nucleus. The polypeptide is Nuclear hormone receptor-like 1 (nhr-1) (Onchocerca volvulus).